The chain runs to 262 residues: uncharacterized protein (262 aa).

Positions 1 to 211 constitute a Radical SAM core domain; the sequence is MAFHVMIIPS…LLYLLDSYLE (211 aa). [4Fe-4S] cluster is bound by residues cysteine 13, cysteine 17, and cysteine 20.

The protein belongs to the radical SAM superfamily. Anaerobic sulfatase-maturating enzyme family. Requires [4Fe-4S] cluster as cofactor.

This is an uncharacterized protein from Methanothermobacter thermautotrophicus (strain ATCC 29096 / DSM 1053 / JCM 10044 / NBRC 100330 / Delta H) (Methanobacterium thermoautotrophicum).